Reading from the N-terminus, the 185-residue chain is Guanosine deaminase (185 aa).

Residues aspartate 28–phenylalanine 142 enclose the CMP/dCMP-type deaminase domain. Residue histidine 80 coordinates Zn(2+). Glutamate 82 serves as the catalytic Proton donor. Residues cysteine 110 and cysteine 113 each coordinate Zn(2+).

This sequence belongs to the cytidine and deoxycytidylate deaminase family. Expressed in roots, leaves, flowers and siliques.

It is found in the cytoplasm. Its subcellular location is the nucleus. It carries out the reaction guanosine + H2O + H(+) = xanthosine + NH4(+). Catalyzes the hydrolytic deamination of guanosine, producing xanthosine and ammonia. Deaminates exclusively guanosine and 2'-deoxyguanosine but no other aminated purines, pyrimidines, or pterines. Deamination of guanosine by GSDA is the only source of xanthosine production in Arabidopsis. This is Guanosine deaminase from Arabidopsis thaliana (Mouse-ear cress).